The following is a 378-amino-acid chain: Chlorophyll synthase, chloroplastic (378 aa).

A chloroplast-targeting transit peptide spans 1–45 (MATSHPLAAAAATSSSSATFRPPLRFLSSPPSSLTLNRRRSFPVV). Transmembrane regions (helical) follow at residues 173-193 (VITQ…LLDI), 199-219 (FPII…YSAP), 232-252 (FALG…LFGT), 257-277 (IVVL…VNDF), 302-322 (WICV…LLST), 327-347 (YALA…QYFL), and 357-377 (YQAS…LATS).

This sequence belongs to the UbiA prenyltransferase family. Chlorophyll synthase subfamily. Mg(2+) serves as cofactor. The cofactor is Zn(2+). Mn(2+) is required as a cofactor.

The protein resides in the plastid. It localises to the chloroplast membrane. It carries out the reaction phytyl diphosphate + chlorophyllide a + H(+) = chlorophyll a + diphosphate. Inhibited by N-phenylmaleimide (NPM) and diacetyl. Functionally, involved in one of the last steps of the biosynthesis of chlorophyll a. Catalyzes the esterification of chlorophillide a with either geranylgeranyldiphosphate (GGPP) or phytyldiphosphate (PhyPP). May also use with a lower efficiency the monophosphates GGMP and PhyMP, but not the non-phosphorylated alcohols geranylgeraniol and phytol. The tetraprenyl diphosphate must bind to the enzyme as the first substrate and esterification occurs when this pre-loaded enzyme meets the second substrate, chlorophyllide. The protein is Chlorophyll synthase, chloroplastic (CHLG) of Avena sativa (Oat).